The sequence spans 40 residues: Photosystem II reaction center protein J (40 aa).

A helical transmembrane segment spans residues 8–28 (IPLWLIGTVVGTPVISLVGIF).

The protein belongs to the PsbJ family. PSII is composed of 1 copy each of membrane proteins PsbA, PsbB, PsbC, PsbD, PsbE, PsbF, PsbH, PsbI, PsbJ, PsbK, PsbL, PsbM, PsbT, PsbX, PsbY, PsbZ, Psb30/Ycf12, at least 3 peripheral proteins of the oxygen-evolving complex and a large number of cofactors. It forms dimeric complexes.

It is found in the plastid. It localises to the chloroplast thylakoid membrane. One of the components of the core complex of photosystem II (PSII). PSII is a light-driven water:plastoquinone oxidoreductase that uses light energy to abstract electrons from H(2)O, generating O(2) and a proton gradient subsequently used for ATP formation. It consists of a core antenna complex that captures photons, and an electron transfer chain that converts photonic excitation into a charge separation. The chain is Photosystem II reaction center protein J from Huperzia lucidula (Shining clubmoss).